The following is a 456-amino-acid chain: Cysteine--tRNA ligase (456 aa).

Cysteine 29 is a Zn(2+) binding site. Positions 31–41 (PTVYDYAHVGN) match the 'HIGH' region motif. Zn(2+) contacts are provided by cysteine 209, histidine 234, and glutamate 238. Residues 267–271 (KMSKS) carry the 'KMSKS' region motif. Lysine 270 contacts ATP.

The protein belongs to the class-I aminoacyl-tRNA synthetase family. In terms of assembly, monomer. Requires Zn(2+) as cofactor.

Its subcellular location is the cytoplasm. The enzyme catalyses tRNA(Cys) + L-cysteine + ATP = L-cysteinyl-tRNA(Cys) + AMP + diphosphate. The protein is Cysteine--tRNA ligase of Rhodospirillum centenum (strain ATCC 51521 / SW).